Consider the following 210-residue polypeptide: uncharacterized protein (210 aa).

Residues methionine 1–glycine 17 form the signal peptide. Cysteine 18 carries N-palmitoyl cysteine lipidation. Cysteine 18 carries the S-diacylglycerol cysteine lipid modification. The segment covering glutamate 176–glutamate 195 has biased composition (polar residues). Residues glutamate 176 to arginine 210 are disordered. Residues threonine 196–arginine 210 show a composition bias toward basic and acidic residues.

The protein localises to the cell membrane. This is an uncharacterized protein from Bacillus subtilis (strain 168).